The sequence spans 147 residues: 3-dehydroquinate dehydratase (147 aa).

Tyr-22 acts as the Proton acceptor in catalysis. Positions 76, 82, and 89 each coordinate substrate. The Proton donor role is filled by His-102. Substrate contacts are provided by residues 103 to 104 (IS) and Arg-113.

The protein belongs to the type-II 3-dehydroquinase family. In terms of assembly, homododecamer.

It catalyses the reaction 3-dehydroquinate = 3-dehydroshikimate + H2O. It functions in the pathway metabolic intermediate biosynthesis; chorismate biosynthesis; chorismate from D-erythrose 4-phosphate and phosphoenolpyruvate: step 3/7. In terms of biological role, catalyzes a trans-dehydration via an enolate intermediate. The sequence is that of 3-dehydroquinate dehydratase from Fusobacterium nucleatum subsp. nucleatum (strain ATCC 25586 / DSM 15643 / BCRC 10681 / CIP 101130 / JCM 8532 / KCTC 2640 / LMG 13131 / VPI 4355).